A 108-amino-acid chain; its full sequence is UPF0145 protein MADE_1007770 (108 aa).

The protein belongs to the UPF0145 family.

This chain is UPF0145 protein MADE_1007770, found in Alteromonas mediterranea (strain DSM 17117 / CIP 110805 / LMG 28347 / Deep ecotype).